The chain runs to 326 residues: MAVYIAREATKLWRKVCAEIAVELQLLFEKWRLLLAGLVFQYIHGLAARGVHYLHRPGPLLQDLGFMALPELGQDKGYVSESVFTFIFISFLLWSFHPFIYHSKRFYTVLLWRRVLAFLVASQFLRIITFYSTQLPGPNYHCREGSKMATLPPPHNVLEVLLINFPRGVLFGCGDLIFSSHMIFTLVFVRTYHKYGSKRLIKILAWLMAIIQSLLIIASRKHYSVDVVVAWYTVNLVVFFIDNKLPEMPDRTNGSSLLPVTAKDKDGRTKEELHKLEKDCKMKEEFHKLLNGNTVDSTDRRQRVQMNGKHGEDINHTLSDATPNGT.

6 helical membrane-spanning segments follow: residues 33–53 (LLLAGLVFQYIHGLAARGVHY), 82–102 (SVFTFIFISFLLWSFHPFIYH), 115–135 (VLAFLVASQFLRIITFYSTQL), 169–189 (VLFGCGDLIFSSHMIFTLVFV), 199–219 (RLIKILAWLMAIIQSLLIIAS), and 222–242 (HYSVDVVVAWYTVNLVVFFID). Residue histidine 181 is part of the active site. Residues histidine 222 and aspartate 226 contribute to the active site. The tract at residues 306–326 (MNGKHGEDINHTLSDATPNGT) is disordered. A compositionally biased stretch (polar residues) spans 316 to 326 (HTLSDATPNGT).

It belongs to the sphingomyelin synthase family.

It is found in the golgi apparatus. Its subcellular location is the trans-Golgi network membrane. Functionally, catalyzes the transfer of the phosphorylinositol group from phosphatidylinositol (PI) to phytoceramide, an essential step in sphingolipid biosynthesis. May play an important role in modulating plant programmed cell death (PCD) associated with defense (e.g. toward Golovinomyces cichoracearum) by promoting sphingolipid metabolism and regulating ceramide accumulation. The chain is Phosphatidylinositol:ceramide inositolphosphotransferase (ERH1) from Oryza sativa subsp. indica (Rice).